We begin with the raw amino-acid sequence, 183 residues long: Peptide deformylase (183 aa).

Residues C110 and H153 each contribute to the Fe cation site. E154 is an active-site residue. H157 serves as a coordination point for Fe cation.

The protein belongs to the polypeptide deformylase family. Requires Fe(2+) as cofactor.

The enzyme catalyses N-terminal N-formyl-L-methionyl-[peptide] + H2O = N-terminal L-methionyl-[peptide] + formate. Functionally, removes the formyl group from the N-terminal Met of newly synthesized proteins. Requires at least a dipeptide for an efficient rate of reaction. N-terminal L-methionine is a prerequisite for activity but the enzyme has broad specificity at other positions. The chain is Peptide deformylase from Listeria monocytogenes serovar 1/2a (strain ATCC BAA-679 / EGD-e).